Here is a 256-residue protein sequence, read N- to C-terminus: Alcohol dehydrogenase (256 aa).

Residue 12–35 (FVAGLGGIGLDTSKELVKRDLKNL) coordinates NAD(+). Ser140 provides a ligand contact to substrate. Catalysis depends on Tyr153, which acts as the Proton acceptor.

Belongs to the short-chain dehydrogenases/reductases (SDR) family. In terms of assembly, homodimer.

The enzyme catalyses a primary alcohol + NAD(+) = an aldehyde + NADH + H(+). The catalysed reaction is a secondary alcohol + NAD(+) = a ketone + NADH + H(+). This is Alcohol dehydrogenase (Adh) from Drosophila erecta (Fruit fly).